Here is a 137-residue protein sequence, read N- to C-terminus: Probable 4-amino-4-deoxy-L-arabinose-phosphoundecaprenol flippase subunit ArnF (137 aa).

The Cytoplasmic segment spans residues 1-5 (MSRAR). Residues 6-26 (GFAFALGSVALVSGAQLGMRW) form a helical membrane-spanning segment. The Periplasmic segment spans residues 27–49 (SMTRLPAPDQWLPALSAGSVDLA). Residues 50–70 (ALAVVAAAIAAYALSMLCWLL) traverse the membrane as a helical segment. Residues 71–80 (ALRDLPLGRA) are Cytoplasmic-facing. A helical membrane pass occupies residues 81-101 (YSLLSISYALVYLLAASLPLF). Residue N102 is a topological domain, periplasmic. A helical transmembrane segment spans residues 103 to 123 (EPFTLSKTLGVALVILGVITI). Topologically, residues 124–137 (NSRSAPATSPRNTP) are cytoplasmic.

Belongs to the ArnF family. In terms of assembly, heterodimer of ArnE and ArnF.

Its subcellular location is the cell inner membrane. The protein operates within bacterial outer membrane biogenesis; lipopolysaccharide biosynthesis. In terms of biological role, translocates 4-amino-4-deoxy-L-arabinose-phosphoundecaprenol (alpha-L-Ara4N-phosphoundecaprenol) from the cytoplasmic to the periplasmic side of the inner membrane. This chain is Probable 4-amino-4-deoxy-L-arabinose-phosphoundecaprenol flippase subunit ArnF, found in Pseudomonas fluorescens (strain ATCC BAA-477 / NRRL B-23932 / Pf-5).